The primary structure comprises 357 residues: Peptide chain release factor 1 (357 aa).

N5-methylglutamine is present on Q232. Over residues 282-291 the composition is skewed to basic and acidic residues; sequence KQRAEQEAAR. A disordered region spans residues 282 to 302; it reads KQRAEQEAARRSQVGTGDRSE.

Belongs to the prokaryotic/mitochondrial release factor family. Post-translationally, methylated by PrmC. Methylation increases the termination efficiency of RF1.

It is found in the cytoplasm. Functionally, peptide chain release factor 1 directs the termination of translation in response to the peptide chain termination codons UAG and UAA. The sequence is that of Peptide chain release factor 1 from Solidesulfovibrio magneticus (strain ATCC 700980 / DSM 13731 / RS-1) (Desulfovibrio magneticus).